A 284-amino-acid polypeptide reads, in one-letter code: 2-dehydro-3-deoxyphosphooctonate aldolase (284 aa).

The protein belongs to the KdsA family.

It is found in the cytoplasm. It carries out the reaction D-arabinose 5-phosphate + phosphoenolpyruvate + H2O = 3-deoxy-alpha-D-manno-2-octulosonate-8-phosphate + phosphate. Its pathway is carbohydrate biosynthesis; 3-deoxy-D-manno-octulosonate biosynthesis; 3-deoxy-D-manno-octulosonate from D-ribulose 5-phosphate: step 2/3. The protein operates within bacterial outer membrane biogenesis; lipopolysaccharide biosynthesis. The polypeptide is 2-dehydro-3-deoxyphosphooctonate aldolase (Pectobacterium atrosepticum (strain SCRI 1043 / ATCC BAA-672) (Erwinia carotovora subsp. atroseptica)).